The chain runs to 1767 residues: Trans-Golgi network-localized SYP41-interacting protein 1 (1767 aa).

A disordered region spans residues 1-72 (MHEKDDLPQD…LTTDDDDNDD (72 aa)). The Cytoplasmic segment spans residues 1–1748 (MHEKDDLPQD…RVLMSRPQAR (1748 aa)). Residues 16–32 (IENDDESNGQEEEELDP) show a composition bias toward acidic residues. 5 coiled-coil regions span residues 276–436 (LSHL…MSTA), 493–516 (VRSLAEERKELTNVSQEYNRLKDL), 570–590 (KSNIRKELDDLSFSLKKMEET), 684–805 (VSNL…LQQS), and 845–1082 (IQEV…LSSK). Over residues 1177–1190 (DNSVNTEPENSQGS) the composition is skewed to polar residues. The segment at 1177-1198 (DNSVNTEPENSQGSAADEDEIS) is disordered. 4 coiled-coil regions span residues 1251-1310 (NSSL…FQEN), 1362-1424 (IRDM…WHEK), 1522-1542 (LKKATEAESTTELELVKAKNE), and 1603-1630 (LAGSEKLVDKLSLRVKEFEEKLQTKAIQ). The helical; Anchor for type IV membrane protein transmembrane segment at 1749 to 1766 (LGVMVYSLLLHLWLLASI) threads the bilayer. A topological domain (vesicular) is located at residue leucine 1767.

In terms of assembly, interacts with SYP41. As to expression, expressed ubiquitously in roots, leaves and flowers, and, to a lower extent, in stems.

Its subcellular location is the golgi apparatus. It localises to the trans-Golgi network membrane. Its function is as follows. Tethering factor involved in vesicle fusion at the trans-Golgi network (TGN) thus being required for efficient protein trafficking to the vacuole. Implicated in resistance to salt and osmotic stresses. Modulates the cell morphology (e.g. epidermal cell file rotation (CFR) and cell expansion) in mature regions of roots and the base of hypocotyls as well as root skewing, a process leading to root movement within the soil in order to maximize anchorage and nutrient acquisition, probably by regulating microtubule stabilization independently of their orientation. The protein is Trans-Golgi network-localized SYP41-interacting protein 1 of Arabidopsis thaliana (Mouse-ear cress).